Here is a 107-residue protein sequence, read N- to C-terminus: Flagellar hook-basal body complex protein FliE (107 aa).

It belongs to the FliE family.

The protein localises to the bacterial flagellum basal body. This is Flagellar hook-basal body complex protein FliE from Cupriavidus pinatubonensis (strain JMP 134 / LMG 1197) (Cupriavidus necator (strain JMP 134)).